The chain runs to 245 residues: Probable septum site-determining protein MinC (245 aa).

Residues 113 to 132 (RERPLEPLVGEEKKKPEKPP) are compositionally biased toward basic and acidic residues. The interval 113 to 138 (RERPLEPLVGEEKKKPEKPPEPTIKP) is disordered.

The protein belongs to the MinC family. Interacts with MinD and FtsZ.

Functionally, cell division inhibitor that blocks the formation of polar Z ring septums. Rapidly oscillates between the poles of the cell to destabilize FtsZ filaments that have formed before they mature into polar Z rings. Prevents FtsZ polymerization. This Pseudomonas fluorescens (strain SBW25) protein is Probable septum site-determining protein MinC.